A 192-amino-acid chain; its full sequence is NADH dehydrogenase [ubiquinone] iron-sulfur protein 3 (192 aa).

The protein belongs to the complex I 30 kDa subunit family. In terms of assembly, complex I is composed of about 45 different subunits. This is a component of the iron-sulfur (IP) fragment of the enzyme.

It localises to the mitochondrion inner membrane. It carries out the reaction a ubiquinone + NADH + 5 H(+)(in) = a ubiquinol + NAD(+) + 4 H(+)(out). Core subunit of the mitochondrial membrane respiratory chain NADH dehydrogenase (Complex I) that is believed to belong to the minimal assembly required for catalysis. Complex I functions in the transfer of electrons from NADH to the respiratory chain. The immediate electron acceptor for the enzyme is believed to be ubiquinone. This Beta vulgaris (Sugar beet) protein is NADH dehydrogenase [ubiquinone] iron-sulfur protein 3 (NAD9).